The sequence spans 59 residues: MAKTIKVTQTRSSIARLPKHKATLKGLGLRNIRHTVELIDTPAIRGMINQVSYMVKVEE.

The protein belongs to the universal ribosomal protein uL30 family. Part of the 50S ribosomal subunit.

The sequence is that of Large ribosomal subunit protein uL30 from Haemophilus ducreyi (strain 35000HP / ATCC 700724).